The chain runs to 386 residues: Patatin group M-1 (386 aa).

The signal sequence occupies residues 1 to 23; it reads MATTKSFLILFFMILATTSSTCA. A PNPLA domain is found at 32 to 229; that stretch reads LSIDGGGIKG…TVGDPALLSL (198 aa). Residues 36–41 carry the GXGXXG motif; sequence GGGIKG. Positions 75–79 match the GXSXG motif; it reads GTSTG. Residue Ser-77 is the Nucleophile of the active site. Asn-115 is a glycosylation site (N-linked (GlcNAc...) asparagine). The active-site Proton acceptor is Asp-215. A DGA/G motif is present at residues 215–217; that stretch reads DGG.

Belongs to the patatin family. As to expression, tuber.

The protein localises to the vacuole. Probable lipolytic acyl hydrolase (LAH), an activity which is thought to be involved in the response of tubers to pathogens. The sequence is that of Patatin group M-1 from Solanum tuberosum (Potato).